The following is a 268-amino-acid chain: Tryptophan synthase alpha chain (268 aa).

Residues glutamate 49 and aspartate 60 each act as proton acceptor in the active site.

The protein belongs to the TrpA family. As to quaternary structure, tetramer of two alpha and two beta chains.

The catalysed reaction is (1S,2R)-1-C-(indol-3-yl)glycerol 3-phosphate + L-serine = D-glyceraldehyde 3-phosphate + L-tryptophan + H2O. It functions in the pathway amino-acid biosynthesis; L-tryptophan biosynthesis; L-tryptophan from chorismate: step 5/5. The alpha subunit is responsible for the aldol cleavage of indoleglycerol phosphate to indole and glyceraldehyde 3-phosphate. The polypeptide is Tryptophan synthase alpha chain (Escherichia coli O1:K1 / APEC).